A 369-amino-acid chain; its full sequence is Cyclin-dependent kinase 5 activator 2 (369 aa).

Positions 1-11 (MGTVLSLSPAS) are enriched in polar residues. Disordered regions lie at residues 1–55 (MGTV…SRLK), 72–176 (ASAK…SPRR), and 330–369 (EAAA…NLDR). G2 carries N-myristoyl glycine lipidation. A compositionally biased stretch (basic residues) spans 74-84 (AKKKKGSKKVT). Position 84 is a phosphothreonine (T84). A compositionally biased stretch (basic and acidic residues) spans 99–112 (RNRENLLRKGRDGP). A compositionally biased stretch (low complexity) spans 122–144 (AVPVPTVPTTAATCEPPSGGSAA). Positions 145 to 171 (APPPGSGGGKPPPPPPPAPQAAPPAPG) are enriched in pro residues. Residues 331–352 (AAASTGGPPSGSSASTTSSSSA) show a composition bias toward low complexity.

The protein belongs to the cyclin-dependent kinase 5 activator family. Heterodimer of a catalytic subunit and a regulatory subunit. Post-translationally, myristoylated. The Gly-2-Ala mutant is absent of the cell periphery, suggesting that a proper myristoylation signal is essential for the proper distribution of CDK5R2 (p39).

It localises to the cell membrane. Functionally, activator of CDK5/TPKII. The sequence is that of Cyclin-dependent kinase 5 activator 2 (Cdk5r2) from Mus musculus (Mouse).